The chain runs to 755 residues: Kelch-like protein 5 (755 aa).

Residues 152 to 184 (LDRPEVDDGTSEEENESDSSSCRTSNSSQTLSS) form a disordered region. Positions 158–168 (DDGTSEEENES) are enriched in acidic residues. The segment covering 169–184 (DSSSCRTSNSSQTLSS) has biased composition (low complexity). The BTB domain occupies 220 to 287 (CDVILVAGDR…AYTGRLELKE (68 aa)). Kelch repeat units follow at residues 468–514 (TLFA…VLDD), 515–561 (KLYV…VLEG), 563–608 (MYAV…VLSG), 609–655 (KLYA…TWNG), 657–708 (LYAI…LLGD), and 709–754 (KLYA…VTVK).

Expressed in adrenal gland, ovary and thyroid gland and less abundantly in lymph node, prostate, spinal cord, testis and trachea.

It localises to the cytoplasm. It is found in the cytoskeleton. The chain is Kelch-like protein 5 (KLHL5) from Homo sapiens (Human).